A 167-amino-acid polypeptide reads, in one-letter code: Crossover junction endodeoxyribonuclease RuvC (167 aa).

Catalysis depends on residues Asp8, Glu68, and Asp140. 3 residues coordinate Mg(2+): Asp8, Glu68, and Asp140.

This sequence belongs to the RuvC family. As to quaternary structure, homodimer which binds Holliday junction (HJ) DNA. The HJ becomes 2-fold symmetrical on binding to RuvC with unstacked arms; it has a different conformation from HJ DNA in complex with RuvA. In the full resolvosome a probable DNA-RuvA(4)-RuvB(12)-RuvC(2) complex forms which resolves the HJ. The cofactor is Mg(2+).

It is found in the cytoplasm. It catalyses the reaction Endonucleolytic cleavage at a junction such as a reciprocal single-stranded crossover between two homologous DNA duplexes (Holliday junction).. Its function is as follows. The RuvA-RuvB-RuvC complex processes Holliday junction (HJ) DNA during genetic recombination and DNA repair. Endonuclease that resolves HJ intermediates. Cleaves cruciform DNA by making single-stranded nicks across the HJ at symmetrical positions within the homologous arms, yielding a 5'-phosphate and a 3'-hydroxyl group; requires a central core of homology in the junction. The consensus cleavage sequence is 5'-(A/T)TT(C/G)-3'. Cleavage occurs on the 3'-side of the TT dinucleotide at the point of strand exchange. HJ branch migration catalyzed by RuvA-RuvB allows RuvC to scan DNA until it finds its consensus sequence, where it cleaves and resolves the cruciform DNA. This chain is Crossover junction endodeoxyribonuclease RuvC, found in Sinorhizobium medicae (strain WSM419) (Ensifer medicae).